The primary structure comprises 89 residues: Small ribosomal subunit protein uS15 (89 aa).

Positions 1 to 18 (MSLDTAEKQKLIENHQVH) are enriched in basic and acidic residues. Residues 1 to 23 (MSLDTAEKQKLIENHQVHPTDTG) are disordered.

It belongs to the universal ribosomal protein uS15 family. As to quaternary structure, part of the 30S ribosomal subunit. Forms a bridge to the 50S subunit in the 70S ribosome, contacting the 23S rRNA.

Its function is as follows. One of the primary rRNA binding proteins, it binds directly to 16S rRNA where it helps nucleate assembly of the platform of the 30S subunit by binding and bridging several RNA helices of the 16S rRNA. Functionally, forms an intersubunit bridge (bridge B4) with the 23S rRNA of the 50S subunit in the ribosome. The chain is Small ribosomal subunit protein uS15 from Prochlorococcus marinus (strain MIT 9301).